The chain runs to 108 residues: Hrp pili protein HrpA (108 aa).

The span at 41–56 (NTGSTDSIDATRSSIS) shows a compositional bias: polar residues. A disordered region spans residues 41–73 (NTGSTDSIDATRSSISKGDAKSAELDGTANEEN).

This sequence belongs to the HrpA type 1 family.

The protein localises to the secreted. It is found in the fimbrium. Major structural protein of the hrp pilus, which is a component of the type III secretion system (T3SS, Hrp secretion system) required for effector protein delivery, parasitism, and pathogenicity. The hrp pilus functions as a conduit for protein delivery into the host cell. Also, affects the expression of T3SS-associated genes. Required for full expression of genes that encode regulatory, secretion, and effector proteins of the T3SS. HrpA-mediated gene regulation apparently is through effect on the mRNA level of HrpR and HrpS. The chain is Hrp pili protein HrpA (hrpA) from Pseudomonas syringae pv. syringae.